Here is a 331-residue protein sequence, read N- to C-terminus: Glyceraldehyde-3-phosphate dehydrogenase, cytosolic (331 aa).

Residues 12–13 (RI), Asp-34, and Arg-78 contribute to the NAD(+) site. Residues 149–151 (SCT), Thr-180, 209–210 (TG), and Arg-232 contribute to the D-glyceraldehyde 3-phosphate site. Cys-150 serves as the catalytic Nucleophile. Asn-314 lines the NAD(+) pocket.

This sequence belongs to the glyceraldehyde-3-phosphate dehydrogenase family. In terms of assembly, homotetramer.

It is found in the cytoplasm. It catalyses the reaction D-glyceraldehyde 3-phosphate + phosphate + NAD(+) = (2R)-3-phospho-glyceroyl phosphate + NADH + H(+). It participates in carbohydrate degradation; glycolysis; pyruvate from D-glyceraldehyde 3-phosphate: step 1/5. This is Glyceraldehyde-3-phosphate dehydrogenase, cytosolic from Trypanosoma brucei brucei.